Reading from the N-terminus, the 179-residue chain is Embryo-specific protein ATS3A (179 aa).

Positions 1–22 are cleaved as a signal peptide; sequence MLRLAIPLFLFALCSFTLFSSA. The PLAT domain occupies 48–158; sequence CSYTVIIKTS…NSVWYGFNVC (111 aa).

In terms of assembly, interacts with EULS3 (via N-terminus). In terms of tissue distribution, expressed in roots, rosette leaves, stems, cauline leaves and flowers.

It localises to the secreted. May play a role during embryo development. The chain is Embryo-specific protein ATS3A from Arabidopsis thaliana (Mouse-ear cress).